We begin with the raw amino-acid sequence, 609 residues long: UvrABC system protein C (609 aa).

The region spanning 16-94 (SSAGVYRMYD…IKQYMPKYNV (79 aa)) is the GIY-YIG domain. Residues 203–238 (QQVISALVDKMELAAERQAYEQAARFRDQIMALRKV) form the UVR domain.

It belongs to the UvrC family. In terms of assembly, interacts with UvrB in an incision complex.

The protein resides in the cytoplasm. Its function is as follows. The UvrABC repair system catalyzes the recognition and processing of DNA lesions. UvrC both incises the 5' and 3' sides of the lesion. The N-terminal half is responsible for the 3' incision and the C-terminal half is responsible for the 5' incision. The polypeptide is UvrABC system protein C (Shewanella baltica (strain OS185)).